A 180-amino-acid polypeptide reads, in one-letter code: Superoxide dismutase [Cu-Zn] (180 aa).

The N-terminal stretch at 1 to 19 (MFMNLLTQVSNAIFPQVEA) is a signal peptide. Cu cation contacts are provided by histidine 68, histidine 70, and histidine 85. Cysteine 79 and cysteine 171 are oxidised to a cystine. Histidine 85, histidine 93, histidine 102, and aspartate 105 together coordinate Zn(2+). Histidine 142 is a binding site for Cu cation.

The protein belongs to the Cu-Zn superoxide dismutase family. Homodimer. Requires Cu cation as cofactor. Zn(2+) is required as a cofactor.

It localises to the cytoplasm. It carries out the reaction 2 superoxide + 2 H(+) = H2O2 + O2. The insertion of copper which activates the protein requires glutathione. This is independent of copper chaperone for SOD1 (CCS), which activates orthologs. In terms of biological role, protects cells against oxidative stress by converting superoxide radicals to hydrogen peroxide. Required for normal brood size. May be involved in regulating mpk-1 phosphorylation downstream of phosphatase ptp-2 during oocyte maturation. This is Superoxide dismutase [Cu-Zn] (sod-1) from Caenorhabditis elegans.